The primary structure comprises 442 residues: Plasmalemma vesicle-associated protein (442 aa).

Residues 1–27 lie on the Cytoplasmic side of the membrane; it reads MGLAMEHGGSYARAGGSSRGCWYYLRY. Residues 28-48 traverse the membrane as a helical; Signal-anchor for type II membrane protein segment; sequence FFLFVSLIQFLIILGLVLFMV. Topologically, residues 49-442 are extracellular; that stretch reads YGNVHVSTES…AGIPVAPSSG (394 aa). Positions 57 to 77 form a coiled coil; that stretch reads ESNLQATERRAEGLYSQLLGL. Asparagine 83, asparagine 89, asparagine 113, and asparagine 151 each carry an N-linked (GlcNAc...) asparagine glycan. Coiled coils occupy residues 202-225 and 280-387; these read KTRE…QALC and SSKV…SALD. 2 disordered regions span residues 301 to 328 and 394 to 418; these read NSDL…VEKE and SQPM…PASL. Residues 319-328 show a composition bias toward basic and acidic residues; sequence QEAKQKVEKE.

As to quaternary structure, homodimer. As to expression, expressed in lung, kidney, heart, aorta, placenta, muscle, pituitary gland, adrenals, mammary gland, bladder, lymph node, bone marrow, trachea, digestive tract, liver and tumor-associated endothelium.

It is found in the cell membrane. Its subcellular location is the membrane. The protein localises to the caveola. It localises to the cytoplasm. The protein resides in the perinuclear region. Endothelial cell-specific membrane protein involved in the formation of the diaphragms that bridge endothelial fenestrae. It is also required for the formation of stomata of caveolae and transendothelial channels. Functions in microvascular permeability, endothelial fenestrae contributing to the passage of water and solutes and regulating transcellular versus paracellular flow in different organs. Plays a specific role in embryonic development. This chain is Plasmalemma vesicle-associated protein (PLVAP), found in Homo sapiens (Human).